Consider the following 264-residue polypeptide: Indole-3-glycerol phosphate synthase (264 aa).

The protein belongs to the TrpC family.

It carries out the reaction 1-(2-carboxyphenylamino)-1-deoxy-D-ribulose 5-phosphate + H(+) = (1S,2R)-1-C-(indol-3-yl)glycerol 3-phosphate + CO2 + H2O. It functions in the pathway amino-acid biosynthesis; L-tryptophan biosynthesis; L-tryptophan from chorismate: step 4/5. The sequence is that of Indole-3-glycerol phosphate synthase from Xylella fastidiosa (strain M12).